Here is a 556-residue protein sequence, read N- to C-terminus: Vetispiradiene synthase 1 (556 aa).

Mg(2+)-binding residues include aspartate 309, aspartate 313, aspartate 452, threonine 456, and glutamate 460. The DDXXD motif motif lies at 309–313 (DDTFD).

The protein belongs to the terpene synthase family. Tpsa subfamily. Requires Mg(2+) as cofactor.

Its subcellular location is the cytoplasm. It catalyses the reaction (2E,6E)-farnesyl diphosphate = (-)-vetispiradiene + diphosphate. The protein operates within secondary metabolite biosynthesis; terpenoid biosynthesis. Sesquiterpene synthase that catalyzes the formation of vetispiradiene from trans,trans-farnesyl diphosphate. The initial internal cyclization produces the monocyclic intermediate germacrene A. This is Vetispiradiene synthase 1 (PVS1) from Solanum tuberosum (Potato).